The sequence spans 314 residues: Lipoyl synthase (314 aa).

Residues cysteine 60, cysteine 65, cysteine 71, cysteine 86, cysteine 90, cysteine 93, and serine 300 each coordinate [4Fe-4S] cluster. The region spanning 72–289 is the Radical SAM core domain; the sequence is FRKGTATFMI…RQFGLSIGFS (218 aa).

It belongs to the radical SAM superfamily. Lipoyl synthase family. It depends on [4Fe-4S] cluster as a cofactor.

It localises to the cytoplasm. It catalyses the reaction [[Fe-S] cluster scaffold protein carrying a second [4Fe-4S](2+) cluster] + N(6)-octanoyl-L-lysyl-[protein] + 2 oxidized [2Fe-2S]-[ferredoxin] + 2 S-adenosyl-L-methionine + 4 H(+) = [[Fe-S] cluster scaffold protein] + N(6)-[(R)-dihydrolipoyl]-L-lysyl-[protein] + 4 Fe(3+) + 2 hydrogen sulfide + 2 5'-deoxyadenosine + 2 L-methionine + 2 reduced [2Fe-2S]-[ferredoxin]. It functions in the pathway protein modification; protein lipoylation via endogenous pathway; protein N(6)-(lipoyl)lysine from octanoyl-[acyl-carrier-protein]: step 2/2. In terms of biological role, catalyzes the radical-mediated insertion of two sulfur atoms into the C-6 and C-8 positions of the octanoyl moiety bound to the lipoyl domains of lipoate-dependent enzymes, thereby converting the octanoylated domains into lipoylated derivatives. The sequence is that of Lipoyl synthase from Pelobacter propionicus (strain DSM 2379 / NBRC 103807 / OttBd1).